Reading from the N-terminus, the 398-residue chain is Galactose-3-O-sulfotransferase 2 (398 aa).

Topologically, residues 1–10 are cytoplasmic; the sequence is MMSMLGGLQR. The chain crosses the membrane as a helical; Signal-anchor for type II membrane protein span at residues 11–31; sequence YFRVILLLLLALTLLLLAGFL. The Lumenal portion of the chain corresponds to 32-398; the sequence is HSDLELDTPL…PLKNIPFLGA (367 aa). 6 N-linked (GlcNAc...) asparagine glycosylation sites follow: Asn-79, Asn-132, Asn-179, Asn-287, Asn-330, and Asn-360.

Belongs to the galactose-3-O-sulfotransferase family. As to expression, ubiquitous. Detected in heart, stomach, colon, liver and spleen, in epithelial cells lining the lower to middle layer of the crypts in colonic mucosa, hepatocytes surrounding the central vein of the liver, extravillous cytotrophoblasts in the basal plate of the septum of the placenta, renal tubules of the kidney, and neuronal cells of the cerebral cortex.

It is found in the golgi apparatus. It localises to the golgi stack membrane. The protein operates within protein modification; carbohydrate sulfation. Its activity is regulated as follows. Strongly inhibited by Cu(2+) and Zn(2+). Functionally, transfers a sulfate group to the hydroxyl group at C3 of non-reducing beta-galactosyl residues. Acts both on type 1 (Gal-beta-1,3-GlcNAc) and type 2 (Gal-beta-1,4-GlcNAc) chains with similar efficiency. This Homo sapiens (Human) protein is Galactose-3-O-sulfotransferase 2 (GAL3ST2).